We begin with the raw amino-acid sequence, 159 residues long: Ubiquitin-conjugating enzyme E2 variant 1B (159 aa).

Residues proline 11 to methionine 159 enclose the UBC core domain.

The protein belongs to the ubiquitin-conjugating enzyme family. As to quaternary structure, heterodimer with UBC35 or UBC36. As to expression, expressed in roots, shoots, leaves, stems and flowers, but not in pollen.

Its function is as follows. Has no ubiquitin ligase activity on its own. The heterodimer with UBC catalyzes the synthesis of non-canonical poly-ubiquitin chains that are linked through 'Lys-63'. This type of poly-ubiquitination does not lead to protein degradation by the proteasome. Mediates transcriptional activation of target genes. May play a role in the control of progress through the cell cycle and differentiation. May play a role in the error-free DNA repair pathway and contributes to the survival of cells after DNA damage. The chain is Ubiquitin-conjugating enzyme E2 variant 1B (UEV1B) from Arabidopsis thaliana (Mouse-ear cress).